A 152-amino-acid chain; its full sequence is Mitochondrial holo-[acyl-carrier-protein] synthase (152 aa).

This sequence belongs to the P-Pant transferase superfamily. AcpS family.

It localises to the mitochondrion. It carries out the reaction apo-[ACP] + CoA = holo-[ACP] + adenosine 3',5'-bisphosphate + H(+). Functionally, transfers the 4'-phosphopantetheine moiety from coenzyme A to a Ser of mitochondrial acyl-carrier-protein. The protein is Mitochondrial holo-[acyl-carrier-protein] synthase (PPT2) of Candida glabrata (strain ATCC 2001 / BCRC 20586 / JCM 3761 / NBRC 0622 / NRRL Y-65 / CBS 138) (Yeast).